The primary structure comprises 542 residues: CTP synthase (542 aa).

An amidoligase domain region spans residues 1–265 (MARYIFITGG…DDEVLAAFGL (265 aa)). Ser-13 is a CTP binding site. Ser-13 is a binding site for UTP. Position 14 to 19 (14 to 19 (SLGKGL)) interacts with ATP. Tyr-54 provides a ligand contact to L-glutamine. Asp-71 contacts ATP. Residues Asp-71 and Glu-139 each contribute to the Mg(2+) site. Residues 146–148 (DIE), 186–191 (KTKPTQ), and Lys-222 each bind CTP. Residues 186 to 191 (KTKPTQ) and Lys-222 contribute to the UTP site. 238 to 240 (RDA) contributes to the ATP binding site. In terms of domain architecture, Glutamine amidotransferase type-1 spans 290–541 (TIAIVGKYTG…IQAAVVQSRL (252 aa)). Residue Gly-352 coordinates L-glutamine. The Nucleophile; for glutamine hydrolysis role is filled by Cys-379. L-glutamine contacts are provided by residues 380–383 (FGMQ), Glu-403, and Arg-469. Active-site residues include His-514 and Glu-516.

It belongs to the CTP synthase family. In terms of assembly, homotetramer.

It catalyses the reaction UTP + L-glutamine + ATP + H2O = CTP + L-glutamate + ADP + phosphate + 2 H(+). The enzyme catalyses L-glutamine + H2O = L-glutamate + NH4(+). It carries out the reaction UTP + NH4(+) + ATP = CTP + ADP + phosphate + 2 H(+). It participates in pyrimidine metabolism; CTP biosynthesis via de novo pathway; CTP from UDP: step 2/2. Its activity is regulated as follows. Allosterically activated by GTP, when glutamine is the substrate; GTP has no effect on the reaction when ammonia is the substrate. The allosteric effector GTP functions by stabilizing the protein conformation that binds the tetrahedral intermediate(s) formed during glutamine hydrolysis. Inhibited by the product CTP, via allosteric rather than competitive inhibition. In terms of biological role, catalyzes the ATP-dependent amination of UTP to CTP with either L-glutamine or ammonia as the source of nitrogen. Regulates intracellular CTP levels through interactions with the four ribonucleotide triphosphates. This is CTP synthase from Nitrobacter hamburgensis (strain DSM 10229 / NCIMB 13809 / X14).